Here is a 161-residue protein sequence, read N- to C-terminus: Cyclic pyranopterin monophosphate synthase (161 aa).

Residues 78–80 (LCH) and 116–117 (ME) contribute to the substrate site. Aspartate 131 is a catalytic residue.

It belongs to the MoaC family. As to quaternary structure, homohexamer; trimer of dimers.

It catalyses the reaction (8S)-3',8-cyclo-7,8-dihydroguanosine 5'-triphosphate = cyclic pyranopterin phosphate + diphosphate. It participates in cofactor biosynthesis; molybdopterin biosynthesis. Its function is as follows. Catalyzes the conversion of (8S)-3',8-cyclo-7,8-dihydroguanosine 5'-triphosphate to cyclic pyranopterin monophosphate (cPMP). This is Cyclic pyranopterin monophosphate synthase from Bordetella parapertussis (strain 12822 / ATCC BAA-587 / NCTC 13253).